A 374-amino-acid chain; its full sequence is Probable dual-specificity RNA methyltransferase RlmN (374 aa).

The Proton acceptor role is filled by E108. Residues Y114 to R361 enclose the Radical SAM core domain. C121 and C367 are oxidised to a cystine. Positions 128, 132, and 135 each coordinate [4Fe-4S] cluster. Residues G188 to E189, S222, S245 to H247, and N324 each bind S-adenosyl-L-methionine. The active-site S-methylcysteine intermediate is C367.

Belongs to the radical SAM superfamily. RlmN family. Requires [4Fe-4S] cluster as cofactor.

Its subcellular location is the cytoplasm. It carries out the reaction adenosine(2503) in 23S rRNA + 2 reduced [2Fe-2S]-[ferredoxin] + 2 S-adenosyl-L-methionine = 2-methyladenosine(2503) in 23S rRNA + 5'-deoxyadenosine + L-methionine + 2 oxidized [2Fe-2S]-[ferredoxin] + S-adenosyl-L-homocysteine. It catalyses the reaction adenosine(37) in tRNA + 2 reduced [2Fe-2S]-[ferredoxin] + 2 S-adenosyl-L-methionine = 2-methyladenosine(37) in tRNA + 5'-deoxyadenosine + L-methionine + 2 oxidized [2Fe-2S]-[ferredoxin] + S-adenosyl-L-homocysteine. Specifically methylates position 2 of adenine 2503 in 23S rRNA and position 2 of adenine 37 in tRNAs. This is Probable dual-specificity RNA methyltransferase RlmN from Mycobacterium sp. (strain JLS).